Here is a 100-residue protein sequence, read N- to C-terminus: Large ribosomal subunit protein uL23 (100 aa).

This sequence belongs to the universal ribosomal protein uL23 family. As to quaternary structure, part of the 50S ribosomal subunit. Contacts protein L29, and trigger factor when it is bound to the ribosome.

Functionally, one of the early assembly proteins it binds 23S rRNA. One of the proteins that surrounds the polypeptide exit tunnel on the outside of the ribosome. Forms the main docking site for trigger factor binding to the ribosome. The protein is Large ribosomal subunit protein uL23 of Buchnera aphidicola subsp. Acyrthosiphon pisum (strain 5A).